A 287-amino-acid chain; its full sequence is Phosphatidylglycerol--prolipoprotein diacylglyceryl transferase (287 aa).

The next 4 membrane-spanning stretches (helical) occupy residues 26–46 (VAIRWYGLAYVTGILIGWWLA), 71–91 (FLVWAAIGIVLGGRIGYILFY), 106–126 (IWRGGMSFHGGLTGATLAMIV), and 132–152 (GLPVWMLFDLVACVAPIGLFF). Arginine 154 lines the a 1,2-diacyl-sn-glycero-3-phospho-(1'-sn-glycerol) pocket. A run of 3 helical transmembrane segments spans residues 187-207 (SQLYEAALEGLVLFVLLQVLA), 217-237 (GVISGVFICGYALARIFVEFF), and 251-271 (WLTMGMLLSLPMLALGLWAIW).

This sequence belongs to the Lgt family.

Its subcellular location is the cell inner membrane. It catalyses the reaction L-cysteinyl-[prolipoprotein] + a 1,2-diacyl-sn-glycero-3-phospho-(1'-sn-glycerol) = an S-1,2-diacyl-sn-glyceryl-L-cysteinyl-[prolipoprotein] + sn-glycerol 1-phosphate + H(+). It functions in the pathway protein modification; lipoprotein biosynthesis (diacylglyceryl transfer). Functionally, catalyzes the transfer of the diacylglyceryl group from phosphatidylglycerol to the sulfhydryl group of the N-terminal cysteine of a prolipoprotein, the first step in the formation of mature lipoproteins. The sequence is that of Phosphatidylglycerol--prolipoprotein diacylglyceryl transferase from Allorhizobium ampelinum (strain ATCC BAA-846 / DSM 112012 / S4) (Agrobacterium vitis (strain S4)).